A 950-amino-acid polypeptide reads, in one-letter code: Glycine dehydrogenase (decarboxylating) (950 aa).

At K698 the chain carries N6-(pyridoxal phosphate)lysine.

The protein belongs to the GcvP family. As to quaternary structure, the glycine cleavage system is composed of four proteins: P, T, L and H. Pyridoxal 5'-phosphate serves as cofactor.

The catalysed reaction is N(6)-[(R)-lipoyl]-L-lysyl-[glycine-cleavage complex H protein] + glycine + H(+) = N(6)-[(R)-S(8)-aminomethyldihydrolipoyl]-L-lysyl-[glycine-cleavage complex H protein] + CO2. Its function is as follows. The glycine cleavage system catalyzes the degradation of glycine. The P protein binds the alpha-amino group of glycine through its pyridoxal phosphate cofactor; CO(2) is released and the remaining methylamine moiety is then transferred to the lipoamide cofactor of the H protein. The polypeptide is Glycine dehydrogenase (decarboxylating) (Neisseria gonorrhoeae (strain ATCC 700825 / FA 1090)).